A 979-amino-acid polypeptide reads, in one-letter code: Mast/stem cell growth factor receptor Kit (979 aa).

The N-terminal stretch at 1-24 is a signal peptide; it reads MRGARGAWDLLCVLLVLLRGQTAT. Topologically, residues 25–527 are extracellular; sequence SQPSASPGEP…QIQAHTLFTP (503 aa). 3 consecutive Ig-like C2-type domains span residues 31 to 117, 126 to 210, and 217 to 315; these read PGEP…DPAK, FGKE…AAIK, and VPET…EKGF. 4 cysteine pairs are disulfide-bonded: Cys-58/Cys-98, Cys-137/Cys-187, Cys-152/Cys-184, and Cys-234/Cys-293. Asn-146 carries an N-linked (GlcNAc...) asparagine glycan. Asn-296, Asn-303, Asn-323, Asn-355, Asn-370, Asn-466, and Asn-489 each carry an N-linked (GlcNAc...) asparagine glycan. Ig-like C2-type domains lie at 324–417 and 420–514; these read TTVF…TKPE and TYDR…FKGN. A disulfide bridge connects residues Cys-431 and Cys-494. Residues 528-548 traverse the membrane as a helical segment; the sequence is LLIGFVVAAGAMGIIVMVLTY. Topologically, residues 549 to 979 are cytoplasmic; sequence KYLQKPMYEV…TQPLLVHEDA (431 aa). Phosphotyrosine; by autocatalysis is present on residues Tyr-550 and Tyr-556. Tyr-571 serves as a coordination point for Mg(2+). Phosphotyrosine is present on residues Tyr-571 and Tyr-573. The interval 571-573 is important for interaction with phosphotyrosine-binding proteins; that stretch reads YVY. The Protein kinase domain maps to 592–939; it reads LSFGKTLGAG…ISDSTKHIYS (348 aa). ATP is bound by residues 599–606, Lys-626, and 674–680; these read GAGAFGKV and EYCCYGD. Tyr-706 is subject to Phosphotyrosine. Ser-720 carries the post-translational modification Phosphoserine. Phosphotyrosine; by autocatalysis occurs at positions 723 and 732. A phosphoserine; by PKC/PRKCA mark is found at Ser-743 and Ser-748. Residue Asp-794 is the Proton acceptor of the active site. Arg-798 contacts ATP. Mg(2+) contacts are provided by Asn-799 and Asp-812. Ser-823 is modified (phosphoserine). Tyr-825 is modified (phosphotyrosine; by autocatalysis). Residue Ser-893 is modified to Phosphoserine. Phosphotyrosine; by autocatalysis is present on Tyr-902. Tyr-938 bears the Phosphotyrosine mark. At Ser-962 the chain carries Phosphoserine.

The protein belongs to the protein kinase superfamily. Tyr protein kinase family. CSF-1/PDGF receptor subfamily. As to quaternary structure, monomer in the absence of bound KITLG/SCF. Homodimer in the presence of bound KITLG/SCF, forming a heterotetramer with two KITLG/SCF molecules. Interacts (via phosphorylated tyrosine residues) with the adapter proteins GRB2 and GRB7 (via SH2 domain), and SH2B2/APS. Interacts (via C-terminus) with MPDZ (via the tenth PDZ domain). Interacts (via phosphorylated tyrosine residues) with the protein phosphatases PTPN6/SHP-1 (via SH2 domain), PTPN11/SHP-2 (via SH2 domain) and PTPRU. Interacts with DOK1 and TEC. Interacts with the protein kinase FES/FPS. Interacts with PLCG1. Interacts (via phosphorylated tyrosine residues) with PIK3R1 and PIK3 catalytic subunit. Interacts (KITLG/SCF-bound) with IL1RL1. Interacts with IL1RAP (independent of stimulation with KITLG/SCF). A mast cell-specific KITLG/SCF-induced interleukin-33 signaling complex contains IL1RL1, IL1RAP, KIT and MYD88. In terms of processing, ubiquitinated by SOCS6. KIT is rapidly ubiquitinated after autophosphorylation induced by KITLG/SCF binding, leading to internalization and degradation. Post-translationally, autophosphorylated on tyrosine residues. KITLG/SCF binding promotes autophosphorylation of isoform 1 and isoform 2. Isoform 1 shows low levels of tyrosine phosphorylation in the absence of added KITLG/SCF, while isoform 2 requires stimulation by KITLG/SCF for phosphorylation (in vitro). Phosphorylation of Tyr-573 is required for interaction with PTPN6/SHP-1. Phosphorylation of Tyr-571 is required for interaction with PTPN11/SHP-2. Phosphorylated tyrosine residues are important for interaction with specific binding partners. In terms of tissue distribution, isoform 1 and isoform 2 are detected in bone marrow cells, spermatogonia and spermatocytes, but not in round spermatids, elongating spermatids and spermatozoa. Isoform 3 is detected in round spermatids, elongating spermatids and spermatozoa, but not in spermatogonia and spermatocytes (at protein level). Isoform 1 is widely expressed and detected in fetal liver and bone marrow. Isoform 3 is detected in bone marrow cells enriched in hematopoietic stem cells.

The protein localises to the cell membrane. It localises to the cytoplasm. The catalysed reaction is L-tyrosyl-[protein] + ATP = O-phospho-L-tyrosyl-[protein] + ADP + H(+). With respect to regulation, present in an inactive conformation in the absence of bound ligand. KITLG/SCF binding leads to dimerization and activation by autophosphorylation. Its function is as follows. Tyrosine-protein kinase that acts as a cell-surface receptor for the cytokine KITLG/SCF and plays an essential role in the regulation of cell survival and proliferation, hematopoiesis, stem cell maintenance, gametogenesis, mast cell development, migration and function, and in melanogenesis. In response to KITLG/SCF binding, KIT can activate several signaling pathways. Phosphorylates PIK3R1, PLCG1, SH2B2/APS and CBL. Activates the AKT1 signaling pathway by phosphorylation of PIK3R1, the regulatory subunit of phosphatidylinositol 3-kinase. Activated KIT also transmits signals via GRB2 and activation of RAS, RAF1 and the MAP kinases MAPK1/ERK2 and/or MAPK3/ERK1. Promotes activation of STAT family members STAT1, STAT3, STAT5A and STAT5B. Activation of PLCG1 leads to the production of the cellular signaling molecules diacylglycerol and inositol 1,4,5-trisphosphate. KIT signaling is modulated by protein phosphatases, and by rapid internalization and degradation of the receptor. Activated KIT promotes phosphorylation of the protein phosphatases PTPN6/SHP-1 and PTPRU, and of the transcription factors STAT1, STAT3, STAT5A and STAT5B. Promotes phosphorylation of PIK3R1, CBL, CRK (isoform Crk-II), LYN, MAPK1/ERK2 and/or MAPK3/ERK1, PLCG1, SRC and SHC1. This Mus musculus (Mouse) protein is Mast/stem cell growth factor receptor Kit (Kit).